We begin with the raw amino-acid sequence, 483 residues long: 23S rRNA (uracil(1939)-C(5))-methyltransferase RlmD (483 aa).

The segment covering 1 to 11 has biased composition (basic residues); sequence MTGLGKRRPAR. Residues 1 to 36 are disordered; sequence MTGLGKRRPARSRSGVSGLRERRQPASVERSAGSEG. Positions 29–90 constitute a TRAM domain; sequence ERSAGSEGRR…KRFDEAHVSE (62 aa). Residues Cys-103, Cys-109, Cys-112, and Cys-189 each contribute to the [4Fe-4S] cluster site. S-adenosyl-L-methionine is bound by residues Gln-298, Phe-332, Asn-337, Glu-353, Asp-379, and Asp-401. Cys-427 serves as the catalytic Nucleophile.

Belongs to the class I-like SAM-binding methyltransferase superfamily. RNA M5U methyltransferase family. RlmD subfamily.

The enzyme catalyses uridine(1939) in 23S rRNA + S-adenosyl-L-methionine = 5-methyluridine(1939) in 23S rRNA + S-adenosyl-L-homocysteine + H(+). Its function is as follows. Catalyzes the formation of 5-methyl-uridine at position 1939 (m5U1939) in 23S rRNA. The sequence is that of 23S rRNA (uracil(1939)-C(5))-methyltransferase RlmD from Halomonas elongata (strain ATCC 33173 / DSM 2581 / NBRC 15536 / NCIMB 2198 / 1H9).